Consider the following 288-residue polypeptide: MNIILSRDSQVRVMEDTVTNAEKSFGQFCSLLAAYTRKTARLRDKADQLVKQLIDFANTENPEMRATLRNFAEDLAKVQDYRQAEVERLETKVINPLKLYGVQIKQTRAEIKKFKSVRNNEIKQLEKLEKLRQKSPSDRQTISQAETSVQRASVDASRTSHQLEETVDTFQKQKLKDIQKIFSDFVTIEMVFHAKAVEVYSSAFQTLESYDLEKDLEDFRAKMHGVYGRYDARPPLMDTTLSPALPWSLAQSAQSTIRSQRKEAVSEDDSAEEDPVEDLRGQAQRLNQ.

The BAR-like stretch occupies residues 6 to 217; that stretch reads SRDSQVRVME…ESYDLEKDLE (212 aa). Disordered regions lie at residues 133–157 and 256–288; these read QKSPSDRQTISQAETSVQRASVDAS and TIRSQRKEAVSEDDSAEEDPVEDLRGQAQRLNQ. Over residues 138–157 the composition is skewed to polar residues; the sequence is DRQTISQAETSVQRASVDAS. Over residues 266 to 276 the composition is skewed to acidic residues; sequence SEDDSAEEDPV.

Belongs to the CIBAR family. As to quaternary structure, homodimer (via BAR-like domain). Heterodimer (via BAR-like domain) with FAM92A. Interacts with CBY1.

It is found in the cytoplasm. The protein localises to the cytoskeleton. The protein resides in the microtubule organizing center. Its subcellular location is the centrosome. It localises to the centriole. It is found in the cilium basal body. May play a role in ciliogenesis. In cooperation with CBY1 may facilitate ciliogenesis likely by the recruitment and fusion of endosomal vesicles at distal appendages during early stages of ciliogenesis. The polypeptide is CBY1-interacting BAR domain-containing protein 2 (CIBAR2) (Bos taurus (Bovine)).